Consider the following 369-residue polypeptide: Phosphoserine aminotransferase (369 aa).

L-glutamate is bound at residue Arg42. Pyridoxal 5'-phosphate contacts are provided by Trp101, Thr152, Asp176, and Gln199. An N6-(pyridoxal phosphate)lysine modification is found at Lys200. 241–242 (NT) is a binding site for pyridoxal 5'-phosphate.

It belongs to the class-V pyridoxal-phosphate-dependent aminotransferase family. SerC subfamily. In terms of assembly, homodimer. Requires pyridoxal 5'-phosphate as cofactor.

The protein localises to the cytoplasm. The catalysed reaction is O-phospho-L-serine + 2-oxoglutarate = 3-phosphooxypyruvate + L-glutamate. The enzyme catalyses 4-(phosphooxy)-L-threonine + 2-oxoglutarate = (R)-3-hydroxy-2-oxo-4-phosphooxybutanoate + L-glutamate. The protein operates within amino-acid biosynthesis; L-serine biosynthesis; L-serine from 3-phospho-D-glycerate: step 2/3. Its pathway is cofactor biosynthesis; pyridoxine 5'-phosphate biosynthesis; pyridoxine 5'-phosphate from D-erythrose 4-phosphate: step 3/5. In terms of biological role, catalyzes the reversible conversion of 3-phosphohydroxypyruvate to phosphoserine and of 3-hydroxy-2-oxo-4-phosphonooxybutanoate to phosphohydroxythreonine. This is Phosphoserine aminotransferase from Delftia acidovorans (strain DSM 14801 / SPH-1).